An 85-amino-acid chain; its full sequence is Cell division topological specificity factor (85 aa).

This sequence belongs to the MinE family.

Its function is as follows. Prevents the cell division inhibition by proteins MinC and MinD at internal division sites while permitting inhibition at polar sites. This ensures cell division at the proper site by restricting the formation of a division septum at the midpoint of the long axis of the cell. This Stutzerimonas stutzeri (strain A1501) (Pseudomonas stutzeri) protein is Cell division topological specificity factor.